Consider the following 337-residue polypeptide: Glyceraldehyde-3-phosphate dehydrogenase 3, cytosolic (337 aa).

Residues 13–14, aspartate 35, and arginine 82 contribute to the NAD(+) site; that span reads RI. D-glyceraldehyde 3-phosphate-binding positions include 153-155, threonine 184, 213-214, and arginine 236; these read SCT and TG. The Nucleophile role is filled by cysteine 154. Residue asparagine 318 coordinates NAD(+).

Belongs to the glyceraldehyde-3-phosphate dehydrogenase family. As to quaternary structure, homotetramer.

Its subcellular location is the cytoplasm. The catalysed reaction is D-glyceraldehyde 3-phosphate + phosphate + NAD(+) = (2R)-3-phospho-glyceroyl phosphate + NADH + H(+). It functions in the pathway carbohydrate degradation; glycolysis; pyruvate from D-glyceraldehyde 3-phosphate: step 1/5. Functionally, key enzyme in glycolysis that catalyzes the first step of the pathway by converting D-glyceraldehyde 3-phosphate (G3P) into 3-phospho-D-glyceroyl phosphate. Essential for the maintenance of cellular ATP levels and carbohydrate metabolism. In Oryza sativa subsp. japonica (Rice), this protein is Glyceraldehyde-3-phosphate dehydrogenase 3, cytosolic (GAPC3).